The sequence spans 76 residues: Alpha/kappa-conotoxin-like pl14.1 (76 aa).

An N-terminal signal peptide occupies residues M1 to P27. The propeptide occupies A28–R39. Cystine bridges form between C46/C61 and C50/C63. At N64 the chain carries Asparagine amide. The propeptide occupies G65–V76.

It belongs to the conotoxin J superfamily. In terms of tissue distribution, expressed by the venom duct.

Its subcellular location is the secreted. Its function is as follows. Highly inhibits both nicotinic acetylcholine receptors (neuronal (alpha-3/beta-4) and muscular (alpha-1/beta-1/epsilon/delta) subtypes) and the voltage-gated potassium channel Kv1.6/KCNA6 subtype. The protein is Alpha/kappa-conotoxin-like pl14.1 of Conus planorbis (Planorbis cone).